We begin with the raw amino-acid sequence, 321 residues long: PI-PLC X domain-containing protein 3 (321 aa).

A PI-PLC X-box domain is found at 22 to 197 (SIHSIPLTNL…DYQVLVFYHS (176 aa)). Active-site residues include His-37 and His-114.

Widely expressed, with highest levels in brain, followed by heart atrium. Not detected in small intestine, nor stomach.

The protein localises to the cytoplasm. This is PI-PLC X domain-containing protein 3 (Plcxd3) from Mus musculus (Mouse).